The sequence spans 168 residues: Cytochrome c-type biogenesis protein CcmE (168 aa).

Residues 1-23 (MTTAPSGLPGTPLPPARRRERPR) are Cytoplasmic-facing. Residues 24-44 (WPLLVAGAAVLGLIGYMVLGN) traverse the membrane as a helical; Signal-anchor for type II membrane protein segment. Topologically, residues 45–168 (ANSNLVYYVL…KILNDQSTKP (124 aa)) are extracellular. Residues His-137 and Tyr-141 each contribute to the heme site. Residues 145–168 (DSKGEGQYSQDDLKKILNDQSTKP) are disordered.

It belongs to the CcmE/CycJ family.

It localises to the cell membrane. In terms of biological role, heme chaperone required for the biogenesis of c-type cytochromes. Transiently binds heme delivered by CcmC and transfers the heme to apo-cytochromes in a process facilitated by CcmF and CcmH. The sequence is that of Cytochrome c-type biogenesis protein CcmE from Deinococcus radiodurans (strain ATCC 13939 / DSM 20539 / JCM 16871 / CCUG 27074 / LMG 4051 / NBRC 15346 / NCIMB 9279 / VKM B-1422 / R1).